Here is a 292-residue protein sequence, read N- to C-terminus: Small ribosomal subunit biogenesis GTPase RsgA (292 aa).

In terms of domain architecture, CP-type G spans arginine 64–leucine 221. GTP contacts are provided by residues asparagine 113–aspartate 116 and glycine 164–threonine 172. Residues cysteine 245, cysteine 250, histidine 252, and cysteine 258 each coordinate Zn(2+).

This sequence belongs to the TRAFAC class YlqF/YawG GTPase family. RsgA subfamily. Monomer. Associates with 30S ribosomal subunit, binds 16S rRNA. Zn(2+) is required as a cofactor.

It localises to the cytoplasm. Its function is as follows. One of several proteins that assist in the late maturation steps of the functional core of the 30S ribosomal subunit. Helps release RbfA from mature subunits. May play a role in the assembly of ribosomal proteins into the subunit. Circularly permuted GTPase that catalyzes slow GTP hydrolysis, GTPase activity is stimulated by the 30S ribosomal subunit. The sequence is that of Small ribosomal subunit biogenesis GTPase RsgA from Clostridium botulinum (strain ATCC 19397 / Type A).